The sequence spans 538 residues: Sodium/hydrogen exchanger 1 (538 aa).

Residues 1-19 (MLDSLVSKLPSLSTSDHAS) are Cytoplasmic-facing. A helical transmembrane segment spans residues 20–40 (VVALNLFVALLCACIVLGHLL). The Vacuolar segment spans residues 41–45 (EENRW). The chain crosses the membrane as a helical span at residues 46 to 66 (MNESITALLIGLGTGVTILLI). The Cytoplasmic segment spans residues 67-73 (SKGKSSH). Positions 74 to 94 (LLVFSEDLFFIYLLPPIIFNA) form an intramembrane region, helical. Residues 95–106 (GFQVKKKQFFRN) lie on the Cytoplasmic side of the membrane. A helical transmembrane segment spans residues 107–127 (FVTIMLFGAVGTIISCTIISL). Residues 128–146 (GVTQFFKKLDIGTFDLGDY) are Vacuolar-facing. 2 intramembrane regions (helical) span residues 147–166 (LAIGAIFAATDSVCTLQVLN) and 172–192 (LLYSLVFGEGVVNDATSVVVF). The Vacuolar portion of the chain corresponds to 193–216 (NAIQSFDLTHLNHEAAFHLLGNFL). Residues 217–237 (YLFLLSTLLGAATGLISAYVI) form a helical membrane-spanning segment. The Cytoplasmic portion of the chain corresponds to 238 to 262 (KKLYFGRHSTDREVALMMLMAYLSY). The helical transmembrane segment at 263-283 (MLAELFDLSGILTVFFCGIVM) threads the bilayer. At 284–302 (SHYTWHNVTESSRITTKHT) the chain is on the vacuolar side. A glycan (N-linked (GlcNAc...) asparagine) is linked at Asn290. The chain crosses the membrane as a helical span at residues 303 to 323 (FATLSFLAETFIFLYVGMDAL). The Cytoplasmic portion of the chain corresponds to 324 to 342 (DIDKWRSVSDTPGTSIAVS). Residues 343 to 363 (SILMGLVMVGRAAFVFPLSFL) form a helical membrane-spanning segment. Over 364–378 (SNLAKKNQSEKINFN) the chain is Vacuolar. The N-linked (GlcNAc...) asparagine glycan is linked to Asn370. Residues 379–399 (MQVVIWWSGLMRGAVSMALAY) traverse the membrane as a helical segment. Residues 400-413 (NKFTRAGHTDVRGN) are Cytoplasmic-facing. Residues 414 to 434 (AIMITSTITVCLFSTVVFGML) form a helical membrane-spanning segment. Over 435–538 (TKPLISYLLP…ERNPPDLSKA (104 aa)) the chain is Vacuolar. Asn447 is a glycosylation site (N-linked (GlcNAc...) asparagine). The tract at residues 496–518 (RTVHYYWRQFDDSFMRPVFGGRG) is interaction with CML18/CAM15.

Belongs to the monovalent cation:proton antiporter 1 (CPA1) transporter (TC 2.A.36) family. As to quaternary structure, calcium and pH-dependent interaction with CML18/CAM15 (increases when pH decreases, better at pH 5.5 than at pH 7.5). Ubiquitous, with higher levels around vascular tissues and guard cells.

Its subcellular location is the vacuole membrane. It is found in the endoplasmic reticulum membrane. The protein resides in the golgi apparatus membrane. It carries out the reaction Na(+)(in) + H(+)(out) = Na(+)(out) + H(+)(in). It catalyses the reaction K(+)(in) + H(+)(out) = K(+)(out) + H(+)(in). Its function is as follows. Acts in low affinity electroneutral exchange of protons for cations such as Na(+) or K(+) across membranes. Can also exchange Li(+) and Cs(+) with a lower affinity. Involved in vacuolar ion compartmentalization necessary for cell volume regulation and cytoplasmic Na(+) detoxification. Required during leaves expansion, probably to stimulate epidermal cell expansion. Confers competence to grow in high salinity conditions. In Arabidopsis thaliana (Mouse-ear cress), this protein is Sodium/hydrogen exchanger 1 (NHX1).